The primary structure comprises 312 residues: Tetraspanin-17 (312 aa).

A run of 4 helical transmembrane segments spans residues 17-37 (IFSIYYWLSALGHVFLGLWML), 64-84 (VSLVCGCAQLLVGFLGLCGAV), 89-109 (FLLLAFVMFLIGTFLADVAMG), and 274-294 (IWIFVGFGFGSALTMMLGICL).

Belongs to the tetraspanin (TM4SF) family. Expressed in dopaminergic neurons, head muscles, vulva and spermatheca.

The protein resides in the cell membrane. The protein localises to the cell projection. Its subcellular location is the dendrite. It is found in the axon. In terms of biological role, protects dopaminergic neurons against oxidative stress-induced neurodegeneration. May act partly via dopamine receptor dop-2 to negatively regulate dopamine reuptake transporter dat-1 activity. Also plays a role in modulating behaviors linked to dopamine signaling. Confers protection against oxidative stress in the whole body. This chain is Tetraspanin-17, found in Caenorhabditis elegans.